The sequence spans 679 residues: F-box/LRR-repeat protein 5 (679 aa).

Residues M1–C159 are hemerythrin-like. H15, H57, E58, E61, H80, H126, and E130 together coordinate Fe(3+). The region spanning R205–L251 is the F-box domain. LRR repeat units lie at residues E316–Y342, S343–T367, Q368–G395, C396–A426, C565–G595, C596–G623, and C624–Y649. Residues C650, C664, C674, and C675 each contribute to the [2Fe-2S] cluster site.

As to quaternary structure, part of a SCF (SKP1-cullin-F-box) protein ligase complex. The cofactor is [2Fe-2S] cluster. In terms of processing, ubiquitinated upon iron and oxygen depletion, leading to its degradation by the proteasome. Ubiquitination is regulated by the hemerythrin-like region that acts as an oxygen and iron sensor.

The protein localises to the cytoplasm. It is found in the perinuclear region. The protein resides in the nucleus. It functions in the pathway protein modification; protein ubiquitination. In terms of biological role, component of some SCF (SKP1-cullin-F-box) protein ligase complex that plays a central role in iron homeostasis by promoting the ubiquitination and subsequent degradation of ireb2/irp2. Upon high iron and oxygen level, it specifically recognizes and binds ireb2/irp2, promoting its ubiquitination and degradation by the proteasome. This chain is F-box/LRR-repeat protein 5 (fbxl5), found in Danio rerio (Zebrafish).